We begin with the raw amino-acid sequence, 490 residues long: Betaine aldehyde dehydrogenase (490 aa).

Residues Thr26, Ile27, and Asp93 each contribute to the K(+) site. 150 to 152 provides a ligand contact to NAD(+); the sequence is GAW. The active-site Charge relay system is the Lys162. Position 176 to 179 (176 to 179) interacts with NAD(+); it reads KPSE. Residue Val180 participates in K(+) binding. 230 to 233 provides a ligand contact to NAD(+); that stretch reads GVAS. Leu246 contributes to the K(+) binding site. The Proton acceptor role is filled by Glu252. The NAD(+) site is built by Gly254, Cys286, and Glu387. Cys286 serves as the catalytic Nucleophile. Residue Cys286 is modified to Cysteine sulfenic acid (-SOH). Residues Lys457 and Gly460 each coordinate K(+). Glu464 serves as the catalytic Charge relay system.

Belongs to the aldehyde dehydrogenase family. In terms of assembly, dimer of dimers. K(+) serves as cofactor.

It carries out the reaction betaine aldehyde + NAD(+) + H2O = glycine betaine + NADH + 2 H(+). The protein operates within amine and polyamine biosynthesis; betaine biosynthesis via choline pathway; betaine from betaine aldehyde: step 1/1. Its function is as follows. Involved in the biosynthesis of the osmoprotectant glycine betaine. Catalyzes the irreversible oxidation of betaine aldehyde to the corresponding acid. This Escherichia coli (strain ATCC 8739 / DSM 1576 / NBRC 3972 / NCIMB 8545 / WDCM 00012 / Crooks) protein is Betaine aldehyde dehydrogenase.